Consider the following 109-residue polypeptide: Nucleoid-associated protein BCE_0021 (109 aa).

It belongs to the YbaB/EbfC family. As to quaternary structure, homodimer.

Its subcellular location is the cytoplasm. The protein localises to the nucleoid. Binds to DNA and alters its conformation. May be involved in regulation of gene expression, nucleoid organization and DNA protection. In Bacillus cereus (strain ATCC 10987 / NRS 248), this protein is Nucleoid-associated protein BCE_0021.